A 508-amino-acid chain; its full sequence is N-acetyl-D-hexosamine oxidase (508 aa).

The FAD-binding PCMH-type domain maps to 26-203; it reads TDAQAAGRIA…TAYTFARLPE (178 aa). The 6-(S-cysteinyl)-8alpha-(pros-histidyl)-FAD (His-Cys) cross-link spans 64–123; that stretch reads HCYEDFVSNNPDGAIVDLSLLNAPEVRADGTVRIPAGTQNWNGYLELYKRHNLTLPGGSC.

The protein belongs to the oxygen-dependent FAD-linked oxidoreductase family. FAD serves as cofactor.

It catalyses the reaction N-acetyl-D-glucosamine + O2 + H2O = N-acetyl-D-glucosaminate + H2O2 + H(+). It carries out the reaction N-acetyl-D-galactosamine + O2 + H2O = N-acetyl-D-galactosaminate + H2O2 + H(+). The enzyme catalyses N-acetyl-D-glucosamine + O2 = N-acetyl-D-glucosamino-1,5-lactone + H2O2. The catalysed reaction is N-acetyl-D-galactosamine + O2 = N-acetyl-D-galactosamino-1,5-lactone + H2O2. In terms of biological role, catalyzes the oxidation of a range of monosaccharides in vitro, displaying the highest activity with N-acetylglucosamine (GlcNAc) and N-acetylgalactosamine (GalNAc), with a reduction of O2 to H2O2. Acts upon the C1 carbon of the GlcNAc or GalNAc molecule, producing the corresponding lactone, which can spontaneously hydrolyze. Its biological function is unclear, but its main function might be connected to extracellular production of hydrogen peroxide to compete with other organisms through oxidative stress, or support the action of peroxidases and peroxygenases. This is N-acetyl-D-hexosamine oxidase from Ralstonia solanacearum (strain UW551).